Consider the following 101-residue polypeptide: Putative membrane protein insertion efficiency factor (101 aa).

The protein belongs to the UPF0161 family.

Its subcellular location is the cell membrane. In terms of biological role, could be involved in insertion of integral membrane proteins into the membrane. In Lacticaseibacillus casei (strain BL23) (Lactobacillus casei), this protein is Putative membrane protein insertion efficiency factor.